The sequence spans 539 residues: Cytochrome P450 monooxygenase tenB (539 aa).

Residues 13–33 (LGYYEKVAGVLGFLSIALLFW) traverse the membrane as a helical segment. The interval 439–460 (PFRFSRASKDDDDDGKSTSSHA) is disordered. C481 contacts heme.

Belongs to the cytochrome P450 family. Heme is required as a cofactor.

It is found in the membrane. It participates in secondary metabolite biosynthesis. Cytochrome P450 monooxygenase; part of the gene cluster that mediates the biosynthesis of tenellin-type 2-pyridones, iron-chelating compounds involved in iron stress tolerance, competition with the natural competitor fungus Metarhizium robertsii and insect hosts infection. TenB catalyzes the selective N-hydroxylation of the 2-pyridone nitrogen of yield tellinin and 15-hydroxytellenin (15-HT), respectively. The pathway begins with the assembly of the polyketide-amino acid backbone by the hybrid PKS-NRPS tenS with the help of the enoyl reductase tenC. These enzymes catalyze the synthesis of the pyrrolidine-2-dione intermediates pretellinin A, 11-hydropretellenin A, 12-hydropretellenin A, 13-hydropretellenin A, 14-hydropretellenin A, 12-oxopretellenin A and prototellinin D. The cytochrome P450 monooxygenase tenA then catalyzes an oxidative ring expansion of pretenellin A and 14-hydropretellenin A to form the 2-pyridone core, leading to pretenellin B and pyridovericin, respectively. The cytochrome P450 monooxygenase tenB is then required for the selective N-hydroxylation of the 2-pyridone nitrogen of yield tellinin and 15-hydroxytellenin (15-HT), respectively. The UDP-glucosyltransferase GT1 and the methyltransferase MT1, located outside the tenS gene cluster, contribute to the stepwise glycosylation and methylation of 15-HT to obtain the glycoside pyridovericin-N-O-(4-O-methyl-beta-D-glucopyranoside) (PMGP). Additional related compounds such as 1-O-methyl-15-HT, (8Z)-1-O-methyl-15-HT, and O-methyltenellin A are also produced but the enzymes involved in their biosynthesis have still to be determined. The polypeptide is Cytochrome P450 monooxygenase tenB (Beauveria bassiana (White muscardine disease fungus)).